The sequence spans 68 residues: Alpha/kappa-conotoxin-like pl14.2 (68 aa).

An N-terminal signal peptide occupies residues 1 to 27 (MPSVRSVTCCCLLWMMFSVQLVTPGSP). Residues 28 to 39 (ATAQLSGQRTAR) constitute a propeptide that is removed on maturation. 2 disulfide bridges follow: Cys-46–Cys-61 and Cys-50–Cys-63. Arg-64 is subject to Arginine amide. Positions 65 to 68 (GKRD) are excised as a propeptide.

This sequence belongs to the conotoxin J superfamily. Expressed by the venom duct.

Its subcellular location is the secreted. In terms of biological role, highly inhibits both nicotinic acetylcholine receptors (neuronal (alpha-3/beta-4) and muscular (alpha-1/beta-1/epsilon/delta) subtypes) and the voltage-gated potassium channel Kv1.6/KCNA6 subtype. The protein is Alpha/kappa-conotoxin-like pl14.2 of Conus planorbis (Planorbis cone).